We begin with the raw amino-acid sequence, 70 residues long: Turripeptide Gsp9.3 (70 aa).

Positions 1 to 20 (MKVYCLLLVLLVGLVSQAHG) are cleaved as a signal peptide. The Kazal-like domain maps to 21-70 (QLDKKCQMVCTFDYRPVCGSDGRTYPNKCTLTSTACMSQRSITVFHDGEC). 3 disulfides stabilise this stretch: Cys-26–Cys-56, Cys-30–Cys-49, and Cys-38–Cys-70.

This sequence belongs to the conopeptide P-like superfamily. Expressed by the venom duct.

It is found in the secreted. Its function is as follows. Acts as a neurotoxin by inhibiting an ion channel. May also act as a serine protease inhibitor, since it possess the kazal serine protease inhibitor signature. This Gemmula speciosa (Splendid gem-turris) protein is Turripeptide Gsp9.3.